A 697-amino-acid chain; its full sequence is Polyribonucleotide nucleotidyltransferase (697 aa).

Residues Asp-490 and Asp-496 each contribute to the Mg(2+) site. Residues 557-616 enclose the KH domain; the sequence is PKVVTMTIKPEKIRDVIGPGGKKINEIIDETGVKLDIEQDGTIFIGAVDKDAIARARSII. The S1 motif domain occupies 626-694; it reads GQVYEGKVKR…KQGRVNASHK (69 aa).

It belongs to the polyribonucleotide nucleotidyltransferase family. The cofactor is Mg(2+).

It is found in the cytoplasm. It carries out the reaction RNA(n+1) + phosphate = RNA(n) + a ribonucleoside 5'-diphosphate. In terms of biological role, involved in mRNA degradation. Catalyzes the phosphorolysis of single-stranded polyribonucleotides processively in the 3'- to 5'-direction. In Staphylococcus saprophyticus subsp. saprophyticus (strain ATCC 15305 / DSM 20229 / NCIMB 8711 / NCTC 7292 / S-41), this protein is Polyribonucleotide nucleotidyltransferase.